Reading from the N-terminus, the 55-residue chain is UPF0391 membrane protein NE1120 (55 aa).

Transmembrane regions (helical) follow at residues 4-24 (MALV…AGIA) and 27-47 (LAWA…VFYL).

This sequence belongs to the UPF0391 family.

The protein resides in the cell membrane. The chain is UPF0391 membrane protein NE1120 from Nitrosomonas europaea (strain ATCC 19718 / CIP 103999 / KCTC 2705 / NBRC 14298).